We begin with the raw amino-acid sequence, 120 residues long: QDGDPVKGEAVFKKCMACHRIGPDAKNLVGPVLTGVVGRQAGVAPGFSYSALNHAAGEAGLHWTAENIMAYLPDPNAFLRKFVTDAGNPEAAKGSTKMVFKLPNEQERKDVVAYLKTFSN.

Glutamine 1 carries the post-translational modification Pyrrolidone carboxylic acid. Heme c-binding residues include cysteine 15, cysteine 18, histidine 19, and methionine 98.

This sequence belongs to the cytochrome c family. In terms of processing, binds 1 heme c group covalently per subunit.

In terms of biological role, cytochrome c2 is found mainly in purple, non-sulfur, photosynthetic bacteria where it functions as the electron donor to the oxidized bacteriochlorophyll in the photophosphorylation pathway. However, it may also have a role in the respiratory chain and is found in some non-photosynthetic bacteria. In Rhodospirillum centenum (Rhodocista centenaria), this protein is Cytochrome c2 iso-1.